The primary structure comprises 231 residues: Enolase-phosphatase E1 (231 aa).

This sequence belongs to the HAD-like hydrolase superfamily. MasA/MtnC family. As to quaternary structure, monomer. The cofactor is Mg(2+).

It catalyses the reaction 5-methylsulfanyl-2,3-dioxopentyl phosphate + H2O = 1,2-dihydroxy-5-(methylsulfanyl)pent-1-en-3-one + phosphate. It functions in the pathway amino-acid biosynthesis; L-methionine biosynthesis via salvage pathway; L-methionine from S-methyl-5-thio-alpha-D-ribose 1-phosphate: step 3/6. It participates in amino-acid biosynthesis; L-methionine biosynthesis via salvage pathway; L-methionine from S-methyl-5-thio-alpha-D-ribose 1-phosphate: step 4/6. Bifunctional enzyme that catalyzes the enolization of 2,3-diketo-5-methylthiopentyl-1-phosphate (DK-MTP-1-P) into the intermediate 2-hydroxy-3-keto-5-methylthiopentenyl-1-phosphate (HK-MTPenyl-1-P), which is then dephosphorylated to form the acireductone 1,2-dihydroxy-3-keto-5-methylthiopentene (DHK-MTPene). The polypeptide is Enolase-phosphatase E1 (Stenotrophomonas maltophilia (strain R551-3)).